The chain runs to 134 residues: ATP synthase epsilon chain, chloroplastic (134 aa).

The protein belongs to the ATPase epsilon chain family. In terms of assembly, F-type ATPases have 2 components, CF(1) - the catalytic core - and CF(0) - the membrane proton channel. CF(1) has five subunits: alpha(3), beta(3), gamma(1), delta(1), epsilon(1). CF(0) has three main subunits: a, b and c.

It localises to the plastid. The protein localises to the chloroplast thylakoid membrane. Functionally, produces ATP from ADP in the presence of a proton gradient across the membrane. In Spinacia oleracea (Spinach), this protein is ATP synthase epsilon chain, chloroplastic.